The sequence spans 299 residues: UDP-3-O-acyl-N-acetylglucosamine deacetylase (299 aa).

Residues histidine 75, histidine 232, and aspartate 236 each coordinate Zn(2+). Histidine 259 (proton donor) is an active-site residue.

This sequence belongs to the LpxC family. Zn(2+) serves as cofactor.

It catalyses the reaction a UDP-3-O-[(3R)-3-hydroxyacyl]-N-acetyl-alpha-D-glucosamine + H2O = a UDP-3-O-[(3R)-3-hydroxyacyl]-alpha-D-glucosamine + acetate. It participates in glycolipid biosynthesis; lipid IV(A) biosynthesis; lipid IV(A) from (3R)-3-hydroxytetradecanoyl-[acyl-carrier-protein] and UDP-N-acetyl-alpha-D-glucosamine: step 2/6. Functionally, catalyzes the hydrolysis of UDP-3-O-myristoyl-N-acetylglucosamine to form UDP-3-O-myristoylglucosamine and acetate, the committed step in lipid A biosynthesis. The protein is UDP-3-O-acyl-N-acetylglucosamine deacetylase of Helicobacter hepaticus (strain ATCC 51449 / 3B1).